We begin with the raw amino-acid sequence, 98 residues long: DNA-binding protein Fis (98 aa).

A DNA-binding region (H-T-H motif) is located at residues glutamine 74 to lysine 93.

It belongs to the transcriptional regulatory Fis family. Homodimer.

In terms of biological role, activates ribosomal RNA transcription. Plays a direct role in upstream activation of rRNA promoters. The chain is DNA-binding protein Fis from Vibrio parahaemolyticus serotype O3:K6 (strain RIMD 2210633).